The following is a 1119-amino-acid chain: DNA-directed RNA polymerase D subunit 2b (1119 aa).

Mg(2+) is bound at residue Asp732. Zn(2+)-binding residues include Cys1055, Cys1058, Cys1080, and Cys1083. The segment at 1055–1083 (CRKCKTYANVIERTPSSGRKIRGPYCRVC) adopts a C4-type zinc-finger fold.

It belongs to the RNA polymerase beta chain family. In terms of assembly, component of the RNA polymerase IVa and IVb (Pol IV) complexes.

The protein resides in the nucleus. The enzyme catalyses RNA(n) + a ribonucleoside 5'-triphosphate = RNA(n+1) + diphosphate. In terms of biological role, DNA-dependent RNA polymerase catalyzes the transcription of DNA into RNA using the four ribonucleoside triphosphates as substrates. Second largest component of RNA polymerase IVa and IVb which mediate short-interfering RNAs (siRNA) accumulation and subsequent RNA-directed DNA methylation-dependent (RdDM) silencing of endogenous repeated sequences, including transposable largest subunit. Also required for full erasure of methylation elements. Required for intercellular RNA interference (RNAi) leading to systemic post-transcriptional gene silencing. The sequence is that of DNA-directed RNA polymerase D subunit 2b (NRPD2b) from Arabidopsis thaliana (Mouse-ear cress).